Here is a 662-residue protein sequence, read N- to C-terminus: MSENKFLPICKDDMIERGWEQCDFVLVTADAYIDHHSFGTAIISRVLENAGYKVGIIAQPDWKSVDDFKKLGRPRLGFLVNGGNMDPMVNHYTVSKKLRKKDLYTPKGEMGKRPDRATIVYCNKIREAYKDVNIVIGGIEASLRRFAHYDYWDNKVRKSILVDSGADLLVYGMSEKQIVEVADFLNQGFDGKYIRHIPGTCYIADSLDEIYEEHIVLPSFKEVSSDKRTYAECFKIQYDEQDPVRGRTLVQEHNGKYVVINKPEMPLSREELDRVYALPYQKTYHPIYEKDGGIAAIEEVKFSIVSSRGCSGNCSFCAITFHQGRIVTSRSEDSIVEEAEEITKYDDFKGYIHDIGGPTANFRKPACKKQLTLGACKHKRCMSPGICKNMEVDHREYLHLLRRVRKLPGIKKVFIRSGLRYDYIMADKDDTFFKELVEHHVSGQLKVAPEHVSPNVLKYMGKPAGKTYDEFRRKFFRITERLGKKQFIIPYLMSSHPGCKLEDAIMLAEYLRDINYQPEQVQDFYPTPGTLSTTMFYTGLDPLTMEEVYIPRSKEEKAMQRALLQFKNPKNYNIVYDALVKVGREDLIGNGPKCLIRDKNSFGKGNNHSNHKSGGRKSRNENSGRRESEDKKRSSHSKKQRGNKSRGFDQKSQRSSKGKKRR.

One can recognise a Radical SAM core domain in the interval 296-567; it reads AIEEVKFSIV…AMQRALLQFK (272 aa). [4Fe-4S] cluster is bound by residues cysteine 310, cysteine 314, and cysteine 317. Residues 596–662 form a disordered region; the sequence is IRDKNSFGKG…QRSSKGKKRR (67 aa). The span at 618–632 shows a compositional bias: basic and acidic residues; the sequence is SRNENSGRRESEDKK. Over residues 633 to 644 the composition is skewed to basic residues; that stretch reads RSSHSKKQRGNK.

Belongs to the UPF0313 family. The cofactor is [4Fe-4S] cluster.

In Clostridium perfringens (strain ATCC 13124 / DSM 756 / JCM 1290 / NCIMB 6125 / NCTC 8237 / Type A), this protein is UPF0313 protein CPF_1407.